The sequence spans 77 residues: MKEQKWTHEGLITESLPNGMFRVRLDNEDLILGYVSGKIRRSFIRILPGDRVKIEVSRYDSTRGRIIYRLRNKDSKD.

The S1-like domain occupies 1–71 (MKEQKWTHEG…TRGRIIYRLR (71 aa)).

Belongs to the IF-1 family. As to quaternary structure, component of the 30S ribosomal translation pre-initiation complex which assembles on the 30S ribosome in the order IF-2 and IF-3, IF-1 and N-formylmethionyl-tRNA(fMet); mRNA recruitment can occur at any time during PIC assembly.

The protein resides in the plastid. Its subcellular location is the chloroplast. One of the essential components for the initiation of protein synthesis. Stabilizes the binding of IF-2 and IF-3 on the 30S subunit to which N-formylmethionyl-tRNA(fMet) subsequently binds. Helps modulate mRNA selection, yielding the 30S pre-initiation complex (PIC). Upon addition of the 50S ribosomal subunit IF-1, IF-2 and IF-3 are released leaving the mature 70S translation initiation complex. This is Translation initiation factor IF-1, chloroplastic from Coffea arabica (Arabian coffee).